Consider the following 274-residue polypeptide: MAVIKMKPTSPGQRAVVKVTRDHLYKGEAFAALLEPQHQKSGRNNNGHITTRHKGGGHKHHYRVVDFKRNKDAIPAKVERIEYDPNRTAHIALVCYADGERRYIIAPRNLEVGATIVSGSEAPIRVGNTLPIRNIPVGSTIHCIELKPGAGAQIARSAGTSATLLAREGTYAQVRMRSGEVRRIHIECRATIGEVANEEHSLRQLGKAGVKRWMGIRPTVRGVAMNPIDHPHGGGEGRTGEGRHAVDPWGNLTKGYRTRNNKRTQVMIVSRRKK.

Disordered regions lie at residues 37 to 60 and 224 to 252; these read QHQK…GHKH and AMNP…WGNL. Basic residues predominate over residues 50-60; the sequence is TTRHKGGGHKH. A compositionally biased stretch (basic and acidic residues) spans 229–246; that stretch reads DHPHGGGEGRTGEGRHAV.

Belongs to the universal ribosomal protein uL2 family. In terms of assembly, part of the 50S ribosomal subunit. Forms a bridge to the 30S subunit in the 70S ribosome.

Functionally, one of the primary rRNA binding proteins. Required for association of the 30S and 50S subunits to form the 70S ribosome, for tRNA binding and peptide bond formation. It has been suggested to have peptidyltransferase activity; this is somewhat controversial. Makes several contacts with the 16S rRNA in the 70S ribosome. The sequence is that of Large ribosomal subunit protein uL2 from Paracidovorax citrulli (strain AAC00-1) (Acidovorax citrulli).